Consider the following 262-residue polypeptide: Taurine import ATP-binding protein TauB (262 aa).

The region spanning leucine 4–alanine 233 is the ABC transporter domain. An ATP-binding site is contributed by glycine 38–threonine 45.

This sequence belongs to the ABC transporter superfamily. Taurine importer (TC 3.A.1.17.1) family. In terms of assembly, the complex is composed of two ATP-binding proteins (TauB), two transmembrane proteins (TauC) and a solute-binding protein (TauA).

It is found in the cell inner membrane. The enzyme catalyses taurine(out) + ATP + H2O = taurine(in) + ADP + phosphate + H(+). In terms of biological role, part of the ABC transporter complex TauABC involved in taurine import. Responsible for energy coupling to the transport system. This is Taurine import ATP-binding protein TauB from Pseudomonas putida (Arthrobacter siderocapsulatus).